The chain runs to 543 residues: Putative cysteine ligase BshC (543 aa).

Residues 419-440 (DEKNNDNIDEVVEEVKAQISDI) adopt a coiled-coil conformation.

It belongs to the BshC family.

Functionally, involved in bacillithiol (BSH) biosynthesis. May catalyze the last step of the pathway, the addition of cysteine to glucosamine malate (GlcN-Mal) to generate BSH. This is Putative cysteine ligase BshC from Oceanobacillus iheyensis (strain DSM 14371 / CIP 107618 / JCM 11309 / KCTC 3954 / HTE831).